We begin with the raw amino-acid sequence, 122 residues long: Large ribosomal subunit protein bL12 (122 aa).

It belongs to the bacterial ribosomal protein bL12 family. Homodimer. Part of the ribosomal stalk of the 50S ribosomal subunit. Forms a multimeric L10(L12)X complex, where L10 forms an elongated spine to which 2 to 4 L12 dimers bind in a sequential fashion. Binds GTP-bound translation factors.

In terms of biological role, forms part of the ribosomal stalk which helps the ribosome interact with GTP-bound translation factors. Is thus essential for accurate translation. This chain is Large ribosomal subunit protein bL12, found in Shewanella loihica (strain ATCC BAA-1088 / PV-4).